A 202-amino-acid polypeptide reads, in one-letter code: Chromophore lyase CpcT/CpeT 2 (202 aa).

Belongs to the CpcT/CpeT biliprotein lyase family.

Covalently attaches a chromophore to Cys residue(s) of phycobiliproteins. The sequence is that of Chromophore lyase CpcT/CpeT 2 from Gloeobacter violaceus (strain ATCC 29082 / PCC 7421).